The chain runs to 516 residues: Probable cytosol aminopeptidase (516 aa).

The Mn(2+) site is built by K288 and D293. Residue K300 is part of the active site. Mn(2+) is bound by residues D311, D370, and E372. The active site involves R374.

It belongs to the peptidase M17 family. Requires Mn(2+) as cofactor.

The protein resides in the cytoplasm. The enzyme catalyses Release of an N-terminal amino acid, Xaa-|-Yaa-, in which Xaa is preferably Leu, but may be other amino acids including Pro although not Arg or Lys, and Yaa may be Pro. Amino acid amides and methyl esters are also readily hydrolyzed, but rates on arylamides are exceedingly low.. It carries out the reaction Release of an N-terminal amino acid, preferentially leucine, but not glutamic or aspartic acids.. Presumably involved in the processing and regular turnover of intracellular proteins. Catalyzes the removal of unsubstituted N-terminal amino acids from various peptides. The sequence is that of Probable cytosol aminopeptidase from Cupriavidus taiwanensis (strain DSM 17343 / BCRC 17206 / CCUG 44338 / CIP 107171 / LMG 19424 / R1) (Ralstonia taiwanensis (strain LMG 19424)).